Reading from the N-terminus, the 84-residue chain is Exodeoxyribonuclease 7 small subunit (84 aa).

The tract at residues 65-84 (QEGDWTTSPFEPASGEPPGG) is disordered.

This sequence belongs to the XseB family. In terms of assembly, heterooligomer composed of large and small subunits.

The protein resides in the cytoplasm. It carries out the reaction Exonucleolytic cleavage in either 5'- to 3'- or 3'- to 5'-direction to yield nucleoside 5'-phosphates.. Bidirectionally degrades single-stranded DNA into large acid-insoluble oligonucleotides, which are then degraded further into small acid-soluble oligonucleotides. This chain is Exodeoxyribonuclease 7 small subunit, found in Syntrophobacter fumaroxidans (strain DSM 10017 / MPOB).